The primary structure comprises 56 residues: Large ribosomal subunit protein bL32 (56 aa).

A compositionally biased stretch (basic residues) spans 1–16; it reads MAVQKSKKSRARRGMR. A disordered region spans residues 1–56; sequence MAVQKSKKSRARRGMRRSHDAISGPSLTVDQTSGETHRRHHVTADGYYKGVQVISK. The segment covering 25-34 has biased composition (polar residues); sequence PSLTVDQTSG.

It belongs to the bacterial ribosomal protein bL32 family.

The chain is Large ribosomal subunit protein bL32 from Pseudoalteromonas translucida (strain TAC 125).